Reading from the N-terminus, the 267-residue chain is L-aspartate dehydrogenase (267 aa).

NAD(+) is bound by residues Ala-124 and Asn-190. His-218 is a catalytic residue.

Belongs to the L-aspartate dehydrogenase family.

The catalysed reaction is L-aspartate + NADP(+) + H2O = oxaloacetate + NH4(+) + NADPH + H(+). It carries out the reaction L-aspartate + NAD(+) + H2O = oxaloacetate + NH4(+) + NADH + H(+). Its pathway is cofactor biosynthesis; NAD(+) biosynthesis; iminoaspartate from L-aspartate (dehydrogenase route): step 1/1. Its function is as follows. Specifically catalyzes the NAD or NADP-dependent dehydrogenation of L-aspartate to iminoaspartate. The polypeptide is L-aspartate dehydrogenase (Methanococcus maripaludis (strain C5 / ATCC BAA-1333)).